A 238-amino-acid polypeptide reads, in one-letter code: Tyrosine recombinase XerD-like (238 aa).

One can recognise a Core-binding (CB) domain in the interval 1–75; it reads MKLPNEIEEY…SANQYFLFLY (75 aa). Positions 90-238 constitute a Tyr recombinase domain; sequence VQKKTQSSES…TITALEKYYR (149 aa). Residues K154 and R204 contribute to the active site. Catalysis depends on Y236, which acts as the O-(3'-phospho-DNA)-tyrosine intermediate.

It belongs to the 'phage' integrase family. XerD-like subfamily.

The protein localises to the cytoplasm. Functionally, putative tyrosine recombinase. Not involved in the cutting and rejoining of the recombining DNA molecules on dif(SL) site. This Lactococcus lactis subsp. cremoris (strain SK11) protein is Tyrosine recombinase XerD-like.